The following is a 472-amino-acid chain: Ribulose bisphosphate carboxylase large chain (472 aa).

Asn115 and Thr165 together coordinate substrate. The Proton acceptor role is filled by Lys167. Residue Lys169 coordinates substrate. Mg(2+) contacts are provided by Lys193, Asp195, and Glu196. Position 193 is an N6-carboxylysine (Lys193). His286 serves as the catalytic Proton acceptor. Residues Arg287, His319, and Ser371 each contribute to the substrate site.

This sequence belongs to the RuBisCO large chain family. Type I subfamily. As to quaternary structure, heterohexadecamer of 8 large chains and 8 small chains. Mg(2+) is required as a cofactor.

It catalyses the reaction 2 (2R)-3-phosphoglycerate + 2 H(+) = D-ribulose 1,5-bisphosphate + CO2 + H2O. The enzyme catalyses D-ribulose 1,5-bisphosphate + O2 = 2-phosphoglycolate + (2R)-3-phosphoglycerate + 2 H(+). Its function is as follows. RuBisCO catalyzes two reactions: the carboxylation of D-ribulose 1,5-bisphosphate, the primary event in carbon dioxide fixation, as well as the oxidative fragmentation of the pentose substrate. Both reactions occur simultaneously and in competition at the same active site. In Solemya velum gill symbiont, this protein is Ribulose bisphosphate carboxylase large chain.